A 66-amino-acid polypeptide reads, in one-letter code: COP-associated protein (66 aa).

An HMA domain is found at 1 to 66 (MKIDIPVKGM…AILDAGYELG (66 aa)). Cu cation contacts are provided by Cys-12 and Cys-15.

Its function is as follows. Part of a cation-transporting system which is associated with copper export out of the H.pylori cells. The chain is COP-associated protein (copP) from Helicobacter felis (strain ATCC 49179 / CCUG 28539 / NCTC 12436 / CS1).